A 203-amino-acid chain; its full sequence is Mitotic spindle checkpoint component mad2 (203 aa).

In terms of domain architecture, HORMA spans 13–197; that stretch reads KGSSKLVSEF…TSMHKIDCQV (185 aa).

This sequence belongs to the MAD2 family. In terms of assembly, interacts with mad3 and slp1.

The protein localises to the nucleus. Its function is as follows. Feedback control that prevents cells with incompletely assembled spindles from leaving mitosis. It interacts with the anaphase promoting complex/cyclosome (APC/C) thereby inhibiting APC/C-dependent proteolysis, a step required for exit from mitosis. This is Mitotic spindle checkpoint component mad2 from Schizosaccharomyces pombe (strain 972 / ATCC 24843) (Fission yeast).